The primary structure comprises 100 residues: Aspartyl/glutamyl-tRNA(Asn/Gln) amidotransferase subunit C (100 aa).

This sequence belongs to the GatC family. In terms of assembly, heterotrimer of A, B and C subunits.

It carries out the reaction L-glutamyl-tRNA(Gln) + L-glutamine + ATP + H2O = L-glutaminyl-tRNA(Gln) + L-glutamate + ADP + phosphate + H(+). The catalysed reaction is L-aspartyl-tRNA(Asn) + L-glutamine + ATP + H2O = L-asparaginyl-tRNA(Asn) + L-glutamate + ADP + phosphate + 2 H(+). Its function is as follows. Allows the formation of correctly charged Asn-tRNA(Asn) or Gln-tRNA(Gln) through the transamidation of misacylated Asp-tRNA(Asn) or Glu-tRNA(Gln) in organisms which lack either or both of asparaginyl-tRNA or glutaminyl-tRNA synthetases. The reaction takes place in the presence of glutamine and ATP through an activated phospho-Asp-tRNA(Asn) or phospho-Glu-tRNA(Gln). The protein is Aspartyl/glutamyl-tRNA(Asn/Gln) amidotransferase subunit C of Staphylococcus carnosus (strain TM300).